Reading from the N-terminus, the 288-residue chain is Serine/threonine-protein kinase pef1 (288 aa).

One can recognise a Protein kinase domain in the interval 3-285 (YQRLEKLGEG…GQDALQHAWF (283 aa)). Residues 9–17 (LGEGTYAHV) and Lys32 contribute to the ATP site. Thr13 carries the phosphothreonine modification. Tyr14 bears the Phosphotyrosine mark. Asp126 acts as the Proton acceptor in catalysis.

It belongs to the protein kinase superfamily. CMGC Ser/Thr protein kinase family. CDC2/CDKX subfamily. As to quaternary structure, interacts with the pas1 cyclin.

It catalyses the reaction L-seryl-[protein] + ATP = O-phospho-L-seryl-[protein] + ADP + H(+). The enzyme catalyses L-threonyl-[protein] + ATP = O-phospho-L-threonyl-[protein] + ADP + H(+). In Schizosaccharomyces pombe (strain 972 / ATCC 24843) (Fission yeast), this protein is Serine/threonine-protein kinase pef1 (pef1).